The sequence spans 117 residues: CUE domain-containing protein CUE4 (117 aa).

The tract at residues 27–74 (QVPSRTVQDAKPAPSVATNDPSPEPVPSAPEERVARLNRHGSDRKRAV) is disordered. A Glycyl lysine isopeptide (Lys-Gly) (interchain with G-Cter in ubiquitin) cross-link involves residue lysine 37. Serine 48 bears the Phosphoserine mark. Positions 56–74 (PEERVARLNRHGSDRKRAV) are enriched in basic and acidic residues. A CUE domain is found at 74 to 116 (VNSDMVEIVMTMAPHVPQEKVVQDLRNTGSIEHTMENIFAGKL).

Post-translationally, ubiquitinated.

The protein localises to the cytoplasm. It is found in the endoplasmic reticulum. In Saccharomyces cerevisiae (strain ATCC 204508 / S288c) (Baker's yeast), this protein is CUE domain-containing protein CUE4 (CUE4).